Reading from the N-terminus, the 597-residue chain is Blastula protease 10 (597 aa).

The N-terminal stretch at 1–16 is a signal peptide; sequence MKLILFLSGLVSLVLC. The propeptide at 17-93 is activation peptide; that stretch reads TLAAPTGDQK…DEMTGRKKRK (77 aa). The interval 24–67 is disordered; sequence DQKEIHTETPPPKKPSETTTPGALKTPQPEPKDEEPTPGAFQGD. A Peptidase M12A domain is found at 93–294; that stretch reads KATIYESQRW…ELANLIYECD (202 aa). Disulfide bonds link cysteine 134-cysteine 293, cysteine 162-cysteine 182, cysteine 299-cysteine 315, cysteine 305-cysteine 317, cysteine 319-cysteine 328, cysteine 339-cysteine 365, cysteine 392-cysteine 412, cysteine 484-cysteine 510, and cysteine 537-cysteine 557. Histidine 190 is a binding site for Zn(2+). Residue glutamate 191 is part of the active site. Residues histidine 194 and histidine 200 each contribute to the Zn(2+) site. In terms of domain architecture, EGF-like spans 295–329; the sequence is DIEDCAGANECLNGGYHDTECNCVCPSGYNGDLCE. CUB domains follow at residues 339–449 and 484–595; these read CSER…YRIV and CGGS…YRAI.

It depends on Zn(2+) as a cofactor.

The protein resides in the cytoplasm. The protein localises to the perinuclear region. It localises to the cell cortex. It is found in the secreted. Its subcellular location is the extracellular space. In terms of biological role, could be involved in the differentiation of ectodermal lineages and subsequent patterning of the embryo. The protein is Blastula protease 10 (BP10) of Paracentrotus lividus (Common sea urchin).